The primary structure comprises 246 residues: UDP-2,3-diacylglucosamine hydrolase (246 aa).

Mn(2+) is bound by residues D8, H10, D41, N79, and H114. 79–80 (NR) is a binding site for substrate. D122, K164, K167, and H195 together coordinate substrate. Mn(2+)-binding residues include H195 and H197.

Belongs to the LpxH family. The cofactor is Mn(2+).

It is found in the cell inner membrane. The enzyme catalyses UDP-2-N,3-O-bis[(3R)-3-hydroxytetradecanoyl]-alpha-D-glucosamine + H2O = 2-N,3-O-bis[(3R)-3-hydroxytetradecanoyl]-alpha-D-glucosaminyl 1-phosphate + UMP + 2 H(+). It participates in glycolipid biosynthesis; lipid IV(A) biosynthesis; lipid IV(A) from (3R)-3-hydroxytetradecanoyl-[acyl-carrier-protein] and UDP-N-acetyl-alpha-D-glucosamine: step 4/6. Hydrolyzes the pyrophosphate bond of UDP-2,3-diacylglucosamine to yield 2,3-diacylglucosamine 1-phosphate (lipid X) and UMP by catalyzing the attack of water at the alpha-P atom. Involved in the biosynthesis of lipid A, a phosphorylated glycolipid that anchors the lipopolysaccharide to the outer membrane of the cell. The protein is UDP-2,3-diacylglucosamine hydrolase of Vibrio cholerae serotype O1 (strain ATCC 39541 / Classical Ogawa 395 / O395).